A 146-amino-acid polypeptide reads, in one-letter code: Large ribosomal subunit protein uL16c (146 aa).

The protein belongs to the universal ribosomal protein uL16 family. In terms of assembly, part of the 50S ribosomal subunit.

It localises to the plastid. The protein resides in the chloroplast. This Angiopteris evecta (Mule's foot fern) protein is Large ribosomal subunit protein uL16c.